A 1056-amino-acid chain; its full sequence is Isoleucine--tRNA ligase (1056 aa).

Positions 56-66 match the 'HIGH' region motif; it reads PFATGLPHYGH. Positions 603–607 match the 'KMSKS' region motif; the sequence is KMSKS. Position 606 (K606) interacts with ATP.

This sequence belongs to the class-I aminoacyl-tRNA synthetase family. IleS type 2 subfamily. Monomer. Zn(2+) serves as cofactor.

It localises to the cytoplasm. The enzyme catalyses tRNA(Ile) + L-isoleucine + ATP = L-isoleucyl-tRNA(Ile) + AMP + diphosphate. Functionally, catalyzes the attachment of isoleucine to tRNA(Ile). As IleRS can inadvertently accommodate and process structurally similar amino acids such as valine, to avoid such errors it has two additional distinct tRNA(Ile)-dependent editing activities. One activity is designated as 'pretransfer' editing and involves the hydrolysis of activated Val-AMP. The other activity is designated 'posttransfer' editing and involves deacylation of mischarged Val-tRNA(Ile). The protein is Isoleucine--tRNA ligase of Bdellovibrio bacteriovorus (strain ATCC 15356 / DSM 50701 / NCIMB 9529 / HD100).